We begin with the raw amino-acid sequence, 284 residues long: Putative ABC transporter ATP-binding protein tll2439 (284 aa).

The ABC transporter domain occupies 6–242 (LEFHQVGFRY…WPTFAPELGT (237 aa)). 40-47 (GLNGSGKS) is an ATP binding site.

Belongs to the ABC transporter superfamily.

It is found in the cell inner membrane. In terms of biological role, probably part of an ABC transporter complex. Responsible for energy coupling to the transport system. The chain is Putative ABC transporter ATP-binding protein tll2439 from Thermosynechococcus vestitus (strain NIES-2133 / IAM M-273 / BP-1).